A 148-amino-acid polypeptide reads, in one-letter code: Large ribosomal subunit protein uL15 (148 aa).

Basic residues predominate over residues 1-30; that stretch reads MPSRLRKTRKLRGHVSHGHGRIGKHRKHPG. The tract at residues 1 to 38 is disordered; it reads MPSRLRKTRKLRGHVSHGHGRIGKHRKHPGGRGNAGGL. H39 is subject to (3S)-3-hydroxyhistidine. N6-acetyllysine is present on residues K47 and K55. S68 carries the phosphoserine modification. K110 is subject to N6-acetyllysine.

Belongs to the universal ribosomal protein uL15 family. In terms of assembly, component of the large ribosomal subunit. In terms of processing, hydroxylated on His-39 by MINA.

The protein resides in the cytoplasm. In terms of biological role, component of the large ribosomal subunit. The ribosome is a large ribonucleoprotein complex responsible for the synthesis of proteins in the cell. This is Large ribosomal subunit protein uL15 (RPL27A) from Homo sapiens (Human).